Consider the following 160-residue polypeptide: Putative antiporter subunit mnhE2 (160 aa).

The next 3 membrane-spanning stretches (helical) occupy residues 23–43 (FKFT…YILH), 55–75 (IWVA…SSIS), and 100–120 (SNWA…STVI).

This sequence belongs to the CPA3 antiporters (TC 2.A.63) subunit E family. May form a heterooligomeric complex that consists of seven subunits: mnhA2, mnhB2, mnhC2, mnhD2, mnhE2, mnhF2 and mnhG2.

It is found in the cell membrane. This Staphylococcus epidermidis (strain ATCC 35984 / DSM 28319 / BCRC 17069 / CCUG 31568 / BM 3577 / RP62A) protein is Putative antiporter subunit mnhE2 (mnhE2).